Reading from the N-terminus, the 660-residue chain is uncharacterized protein (660 aa).

The tract at residues 220–239 is disordered; sequence ADARGQAAAPPQAQAPAPPD. Residues 222–239 are compositionally biased toward low complexity; sequence ARGQAAAPPQAQAPAPPD.

This is an uncharacterized protein from Callospermophilus lateralis (Golden-mantled ground squirrel).